The primary structure comprises 545 residues: Thermosome subunit (545 aa).

Belongs to the TCP-1 chaperonin family. In terms of assembly, forms an oligomeric complex of eight-membered rings.

In terms of biological role, molecular chaperone; binds unfolded polypeptides in vitro, and has a weak ATPase activity. In Methanopyrus kandleri (strain AV19 / DSM 6324 / JCM 9639 / NBRC 100938), this protein is Thermosome subunit (ths).